We begin with the raw amino-acid sequence, 443 residues long: Tubulin beta chain (443 aa).

Gln-11, Glu-69, Ser-138, Gly-142, Thr-143, Gly-144, Asn-204, and Asn-226 together coordinate GTP. Glu-69 contacts Mg(2+). Positions Gln-424–Asn-443 are disordered. Positions Thr-429–Asn-443 are enriched in acidic residues.

Belongs to the tubulin family. Dimer of alpha and beta chains. A typical microtubule is a hollow water-filled tube with an outer diameter of 25 nm and an inner diameter of 15 nM. Alpha-beta heterodimers associate head-to-tail to form protofilaments running lengthwise along the microtubule wall with the beta-tubulin subunit facing the microtubule plus end conferring a structural polarity. Microtubules usually have 13 protofilaments but different protofilament numbers can be found in some organisms and specialized cells. It depends on Mg(2+) as a cofactor. In terms of processing, some glutamate residues at the C-terminus are either polyglutamylated or polyglycylated. These 2 modifications occur exclusively on glutamate residues and result in either polyglutamate or polyglycine chains on the gamma-carboxyl group. Both modifications can coexist on the same protein on adjacent residues, and lowering polyglycylation levels increases polyglutamylation, and reciprocally. The precise function of such modifications is still unclear but they regulate the assembly and dynamics of axonemal microtubules.

The protein localises to the cytoplasm. The protein resides in the cytoskeleton. Its function is as follows. Tubulin is the major constituent of microtubules, a cylinder consisting of laterally associated linear protofilaments composed of alpha- and beta-tubulin heterodimers. Microtubules grow by the addition of GTP-tubulin dimers to the microtubule end, where a stabilizing cap forms. Below the cap, tubulin dimers are in GDP-bound state, owing to GTPase activity of alpha-tubulin. In Tetrahymena thermophila, this protein is Tubulin beta chain (BTU1).